The primary structure comprises 85 residues: Conotoxin Lt28.7 (85 aa).

The first 21 residues, 1–21 (MPKLEMMLLVLLILPLCYIDA), serve as a signal peptide directing secretion. A propeptide spanning residues 22-40 (VGPPPPWNMEDEIIEHWQE) is cleaved from the precursor.

It belongs to the conotoxin D superfamily. Contains 5 disulfide bonds. As to expression, expressed by the venom duct.

Its subcellular location is the secreted. Functionally, probable neurotoxin. This is Conotoxin Lt28.7 from Conus litteratus (Lettered cone).